Reading from the N-terminus, the 307-residue chain is Small ribosomal subunit biogenesis GTPase RsgA (307 aa).

One can recognise a CP-type G domain in the interval 80–237 (KADLRQTIVS…IVDTPGIKEF (158 aa)). Residues 129 to 132 (NKID) and 180 to 188 (GQSGVGKSS) contribute to the GTP site. Residues Cys-261, Cys-266, His-268, and Cys-274 each coordinate Zn(2+).

It belongs to the TRAFAC class YlqF/YawG GTPase family. RsgA subfamily. Monomer. Associates with 30S ribosomal subunit, binds 16S rRNA. The cofactor is Zn(2+).

The protein resides in the cytoplasm. In terms of biological role, one of several proteins that assist in the late maturation steps of the functional core of the 30S ribosomal subunit. Helps release RbfA from mature subunits. May play a role in the assembly of ribosomal proteins into the subunit. Circularly permuted GTPase that catalyzes slow GTP hydrolysis, GTPase activity is stimulated by the 30S ribosomal subunit. The chain is Small ribosomal subunit biogenesis GTPase RsgA from Borreliella burgdorferi (strain ATCC 35210 / DSM 4680 / CIP 102532 / B31) (Borrelia burgdorferi).